The primary structure comprises 69 residues: Cytochrome c oxidase subunit 8A, mitochondrial (69 aa).

A mitochondrion-targeting transit peptide spans 1-25 (MSVLTSLLLRGLTGSARRLPVPRAK). Residues 26–36 (VHSMPPEEELG) lie on the Mitochondrial matrix side of the membrane. Residues 37–60 (IMEKAIGLTFCFVSLFLPAGWILS) form a helical membrane-spanning segment. At 61-69 (HLEDYKRPE) the chain is on the mitochondrial intermembrane side.

Belongs to the cytochrome c oxidase VIII family. As to quaternary structure, component of the cytochrome c oxidase (complex IV, CIV), a multisubunit enzyme composed of 14 subunits. The complex is composed of a catalytic core of 3 subunits MT-CO1, MT-CO2 and MT-CO3, encoded in the mitochondrial DNA, and 11 supernumerary subunits COX4I, COX5A, COX5B, COX6A, COX6B, COX6C, COX7A, COX7B, COX7C, COX8 and NDUFA4, which are encoded in the nuclear genome. The complex exists as a monomer or a dimer and forms supercomplexes (SCs) in the inner mitochondrial membrane with NADH-ubiquinone oxidoreductase (complex I, CI) and ubiquinol-cytochrome c oxidoreductase (cytochrome b-c1 complex, complex III, CIII), resulting in different assemblies (supercomplex SCI(1)III(2)IV(1) and megacomplex MCI(2)III(2)IV(2)). Post-translationally, in response to mitochondrial stress, the precursor protein is ubiquitinated by the SIFI complex in the cytoplasm before mitochondrial import, leading to its degradation. Within the SIFI complex, UBR4 initiates ubiquitin chain that are further elongated or branched by KCMF1.

Its subcellular location is the mitochondrion inner membrane. Its pathway is energy metabolism; oxidative phosphorylation. Its function is as follows. Component of the cytochrome c oxidase, the last enzyme in the mitochondrial electron transport chain which drives oxidative phosphorylation. The respiratory chain contains 3 multisubunit complexes succinate dehydrogenase (complex II, CII), ubiquinol-cytochrome c oxidoreductase (cytochrome b-c1 complex, complex III, CIII) and cytochrome c oxidase (complex IV, CIV), that cooperate to transfer electrons derived from NADH and succinate to molecular oxygen, creating an electrochemical gradient over the inner membrane that drives transmembrane transport and the ATP synthase. Cytochrome c oxidase is the component of the respiratory chain that catalyzes the reduction of oxygen to water. Electrons originating from reduced cytochrome c in the intermembrane space (IMS) are transferred via the dinuclear copper A center (CU(A)) of subunit 2 and heme A of subunit 1 to the active site in subunit 1, a binuclear center (BNC) formed by heme A3 and copper B (CU(B)). The BNC reduces molecular oxygen to 2 water molecules using 4 electrons from cytochrome c in the IMS and 4 protons from the mitochondrial matrix. The polypeptide is Cytochrome c oxidase subunit 8A, mitochondrial (COX8A) (Macaca fascicularis (Crab-eating macaque)).